A 150-amino-acid chain; its full sequence is Ribosome maturation factor RimP (150 aa).

The protein belongs to the RimP family.

Its subcellular location is the cytoplasm. Functionally, required for maturation of 30S ribosomal subunits. This chain is Ribosome maturation factor RimP, found in Klebsiella pneumoniae (strain 342).